Reading from the N-terminus, the 447-residue chain is Signal recognition particle 54 kDa protein (447 aa).

Residues 108–115 (GLYGMGKT), 188–192 (DTAGR), and 246–249 (TKLD) contribute to the GTP site.

The protein belongs to the GTP-binding SRP family. SRP54 subfamily. In terms of assembly, part of the signal recognition particle protein translocation system, which is composed of SRP and FtsY. Archaeal SRP consists of a 7S RNA molecule of 300 nucleotides and two protein subunits: SRP54 and SRP19.

The protein resides in the cytoplasm. The catalysed reaction is GTP + H2O = GDP + phosphate + H(+). Involved in targeting and insertion of nascent membrane proteins into the cytoplasmic membrane. Binds to the hydrophobic signal sequence of the ribosome-nascent chain (RNC) as it emerges from the ribosomes. The SRP-RNC complex is then targeted to the cytoplasmic membrane where it interacts with the SRP receptor FtsY. This is Signal recognition particle 54 kDa protein from Methanopyrus kandleri (strain AV19 / DSM 6324 / JCM 9639 / NBRC 100938).